Here is a 91-residue protein sequence, read N- to C-terminus: UPF0728 protein v1g117062 (91 aa).

Belongs to the UPF0728 family.

The sequence is that of UPF0728 protein v1g117062 from Nematostella vectensis (Starlet sea anemone).